Here is a 199-residue protein sequence, read N- to C-terminus: Recombination protein RecR (199 aa).

Residues 56–71 form a C4-type zinc finger; that stretch reads CRSCFNVAQSELCRIC. In terms of domain architecture, Toprim spans 79–174; sequence SSICVVEEPK…KVTRLASGLP (96 aa).

It belongs to the RecR family.

In terms of biological role, may play a role in DNA repair. It seems to be involved in an RecBC-independent recombinational process of DNA repair. It may act with RecF and RecO. The chain is Recombination protein RecR from Frankia casuarinae (strain DSM 45818 / CECT 9043 / HFP020203 / CcI3).